A 232-amino-acid chain; its full sequence is Endonuclease NucS (232 aa).

It belongs to the NucS endonuclease family.

It is found in the cytoplasm. Functionally, cleaves both 3' and 5' ssDNA extremities of branched DNA structures. This Mycobacteroides abscessus (strain ATCC 19977 / DSM 44196 / CCUG 20993 / CIP 104536 / JCM 13569 / NCTC 13031 / TMC 1543 / L948) (Mycobacterium abscessus) protein is Endonuclease NucS.